The sequence spans 161 residues: Phosphopantetheine adenylyltransferase (161 aa).

Belongs to the eukaryotic CoaD family.

Its subcellular location is the cytoplasm. The enzyme catalyses (R)-4'-phosphopantetheine + ATP + H(+) = 3'-dephospho-CoA + diphosphate. Its pathway is cofactor biosynthesis; coenzyme A biosynthesis. Reversibly transfers an adenylyl group from ATP to 4'-phosphopantetheine, yielding dephospho-CoA (dPCoA) and pyrophosphate. In Methanosarcina barkeri (strain Fusaro / DSM 804), this protein is Phosphopantetheine adenylyltransferase.